The following is a 69-amino-acid chain: Small, acid-soluble spore protein I (69 aa).

This sequence belongs to the SspI family.

The protein localises to the spore core. The polypeptide is Small, acid-soluble spore protein I (Geobacillus kaustophilus (strain HTA426)).